A 173-amino-acid polypeptide reads, in one-letter code: HTH-type transcriptional regulator IscR (173 aa).

Residues K2 to K131 enclose the HTH rrf2-type domain. Residues L28–K51 constitute a DNA-binding region (H-T-H motif). [2Fe-2S] cluster contacts are provided by C92, C98, and C104.

Requires [2Fe-2S] cluster as cofactor.

Regulates the transcription of several operons and genes involved in the biogenesis of Fe-S clusters and Fe-S-containing proteins. The polypeptide is HTH-type transcriptional regulator IscR (Vibrio atlanticus (strain LGP32) (Vibrio splendidus (strain Mel32))).